A 195-amino-acid chain; its full sequence is Obelin (195 aa).

Positions 1-6 (MASKYA) are excised as a propeptide. 4 consecutive EF-hand domains span residues 17–52 (KWIK…DICK), 53–88 (NLGA…FPEF), 110–145 (LIRE…SGIS), and 146–181 (PSEE…FWYT). Positions 30, 32, 34, 36, and 41 each coordinate Ca(2+). 10 residues coordinate Ca(2+): Asp123, Asp125, Ser127, Thr129, Glu134, Asp159, Asp161, Ser163, Glu165, and Glu170.

It belongs to the aequorin family.

Ca(2+)-dependent bioluminescence photoprotein. Displays an emission peak at 495 nm (blue light). Trace amounts of calcium ion trigger the intramolecular oxidation of the chromophore, coelenterazine into coelenteramide and CO(2) with the concomitant emission of light. The protein is Obelin of Obelia geniculata (Knotted thread hydroid).